We begin with the raw amino-acid sequence, 339 residues long: MEGEPPPVEERRRLQEELNEFVESGCRTLEEVTASLGWDLDSLDPGEEEAAEDEVVICPYDSNHHMPKSSLAKHMASCRLRKMGYTKEEEDEMYNPEFFYENVKIPSITLNKDSQFQIIKQARTAVGKDSDCYNQRIYSSLPVEVPLNHKRFVCDLTQADRLALYDFVVEETKKKRSDSQIIENDSDLFVDLAAKINQDNSRKSPKSYLEILAEVRDYKRRRQSYRAKNVHITKKSYTEVIRDVINVHMEELSNHWQEEQEKAEDDAEKNEERRSASVDSRQSGGSYLDAECSRHRRDRSRSPHKRKRNKDKDKNCESRRRKERDGERHHSHKRRKQKI.

The CHHC U11-48K-type zinc-finger motif lies at 55 to 82 (VVICPYDSNHHMPKSSLAKHMASCRLRK). Zn(2+) is bound by residues C58, H64, H74, and C78. Glycyl lysine isopeptide (Lys-Gly) (interchain with G-Cter in SUMO2) cross-links involve residues K87 and K104. Positions 255–339 (HWQEEQEKAE…HSHKRRKQKI (85 aa)) are disordered. Over residues 294-309 (RHRRDRSRSPHKRKRN) the composition is skewed to basic residues. Residues 310-328 (KDKDKNCESRRRKERDGER) show a composition bias toward basic and acidic residues. Basic residues predominate over residues 329-339 (HHSHKRRKQKI).

As to quaternary structure, component of the U11/U12 snRNPs that are part of the U12-type spliceosome. Not found in the major spliceosome.

It is found in the nucleus. In terms of biological role, likely involved in U12-type 5' splice site recognition. The polypeptide is U11/U12 small nuclear ribonucleoprotein 48 kDa protein (SNRNP48) (Homo sapiens (Human)).